We begin with the raw amino-acid sequence, 201 residues long: Large ribosomal subunit protein uL4 (201 aa).

Residues 46–71 (QKTRAEVVGSGKKPWRQKGTGRARAG) are disordered.

It belongs to the universal ribosomal protein uL4 family. In terms of assembly, part of the 50S ribosomal subunit.

Its function is as follows. One of the primary rRNA binding proteins, this protein initially binds near the 5'-end of the 23S rRNA. It is important during the early stages of 50S assembly. It makes multiple contacts with different domains of the 23S rRNA in the assembled 50S subunit and ribosome. In terms of biological role, forms part of the polypeptide exit tunnel. The chain is Large ribosomal subunit protein uL4 from Shewanella woodyi (strain ATCC 51908 / MS32).